A 401-amino-acid chain; its full sequence is Acetylornithine aminotransferase (401 aa).

Residues 121–122 and F154 each bind pyridoxal 5'-phosphate; that span reads GA. R157 contacts N(2)-acetyl-L-ornithine. 239–242 provides a ligand contact to pyridoxal 5'-phosphate; sequence DEVQ. N6-(pyridoxal phosphate)lysine is present on K268. N(2)-acetyl-L-ornithine is bound at residue S296. T297 serves as a coordination point for pyridoxal 5'-phosphate.

Belongs to the class-III pyridoxal-phosphate-dependent aminotransferase family. ArgD subfamily. In terms of assembly, homodimer. Pyridoxal 5'-phosphate serves as cofactor.

The protein resides in the cytoplasm. The enzyme catalyses N(2)-acetyl-L-ornithine + 2-oxoglutarate = N-acetyl-L-glutamate 5-semialdehyde + L-glutamate. It participates in amino-acid biosynthesis; L-arginine biosynthesis; N(2)-acetyl-L-ornithine from L-glutamate: step 4/4. In Myxococcus xanthus, this protein is Acetylornithine aminotransferase.